A 519-amino-acid polypeptide reads, in one-letter code: O-fucosyltransferase 1 (519 aa).

Topologically, residues 1-24 are cytoplasmic; it reads MRRLGHHRLHGKTGGVGTKGMVAK. The chain crosses the membrane as a helical; Signal-anchor for type II membrane protein span at residues 25–45; the sequence is LSIGVIVLLICTLSLLFSANI. Over 46–519 the chain is Lumenal; that stretch reads GSNREPTRPS…TNSTVTGLER (474 aa). The disordered stretch occupies residues 67-86; the sequence is KSGGWRPSSAPRSDWPPPTK. N118 carries an N-linked (GlcNAc...) asparagine glycan. A substrate-binding site is contributed by 260–262; it reads HLR. N-linked (GlcNAc...) asparagine glycosylation is found at N327, N357, and N511. The segment at 497–519 is disordered; that stretch reads RLESIRDPDSTSQTNSTVTGLER. The span at 506–519 shows a compositional bias: polar residues; sequence STSQTNSTVTGLER.

It belongs to the glycosyltransferase GT106 family.

The protein localises to the golgi apparatus membrane. The protein operates within glycan metabolism. The polypeptide is O-fucosyltransferase 1 (Arabidopsis thaliana (Mouse-ear cress)).